Consider the following 547-residue polypeptide: Chaperonin GroEL (547 aa).

ATP is bound by residues 30-33 (TLGP), Lys51, 87-91 (DGTTT), Gly415, 479-481 (NAA), and Asp495.

This sequence belongs to the chaperonin (HSP60) family. In terms of assembly, forms a cylinder of 14 subunits composed of two heptameric rings stacked back-to-back. Interacts with the co-chaperonin GroES.

The protein resides in the cytoplasm. It carries out the reaction ATP + H2O + a folded polypeptide = ADP + phosphate + an unfolded polypeptide.. Together with its co-chaperonin GroES, plays an essential role in assisting protein folding. The GroEL-GroES system forms a nano-cage that allows encapsulation of the non-native substrate proteins and provides a physical environment optimized to promote and accelerate protein folding. In Cupriavidus pinatubonensis (strain JMP 134 / LMG 1197) (Cupriavidus necator (strain JMP 134)), this protein is Chaperonin GroEL.